The primary structure comprises 398 residues: Bifunctional enzyme IspD/IspF (398 aa).

Residues 1 to 234 (MTNSPRTAAI…SRLMAALGDI (234 aa)) form a 2-C-methyl-D-erythritol 4-phosphate cytidylyltransferase region. Residues 235-398 (RTGTGYDVHA…LPWGADGLAG (164 aa)) form a 2-C-methyl-D-erythritol 2,4-cyclodiphosphate synthase region. A divalent metal cation is bound by residues Asp-241 and His-243. 4-CDP-2-C-methyl-D-erythritol 2-phosphate contacts are provided by residues 241 to 243 (DVH) and 267 to 268 (HS). His-275 serves as a coordination point for a divalent metal cation. Residues 289–291 (DIG), 365–368 (TTSE), Phe-372, and Arg-375 each bind 4-CDP-2-C-methyl-D-erythritol 2-phosphate.

The protein in the N-terminal section; belongs to the IspD/TarI cytidylyltransferase family. IspD subfamily. It in the C-terminal section; belongs to the IspF family. A divalent metal cation serves as cofactor.

It carries out the reaction 2-C-methyl-D-erythritol 4-phosphate + CTP + H(+) = 4-CDP-2-C-methyl-D-erythritol + diphosphate. It catalyses the reaction 4-CDP-2-C-methyl-D-erythritol 2-phosphate = 2-C-methyl-D-erythritol 2,4-cyclic diphosphate + CMP. It participates in isoprenoid biosynthesis; isopentenyl diphosphate biosynthesis via DXP pathway; isopentenyl diphosphate from 1-deoxy-D-xylulose 5-phosphate: step 2/6. Its pathway is isoprenoid biosynthesis; isopentenyl diphosphate biosynthesis via DXP pathway; isopentenyl diphosphate from 1-deoxy-D-xylulose 5-phosphate: step 4/6. Functionally, bifunctional enzyme that catalyzes the formation of 4-diphosphocytidyl-2-C-methyl-D-erythritol from CTP and 2-C-methyl-D-erythritol 4-phosphate (MEP) (IspD), and catalyzes the conversion of 4-diphosphocytidyl-2-C-methyl-D-erythritol 2-phosphate (CDP-ME2P) to 2-C-methyl-D-erythritol 2,4-cyclodiphosphate (ME-CPP) with a corresponding release of cytidine 5-monophosphate (CMP) (IspF). This chain is Bifunctional enzyme IspD/IspF, found in Rhodopseudomonas palustris (strain TIE-1).